A 566-amino-acid polypeptide reads, in one-letter code: DNA ligase B (566 aa).

The active-site N6-AMP-lysine intermediate is K125.

The protein belongs to the NAD-dependent DNA ligase family. LigB subfamily.

It catalyses the reaction NAD(+) + (deoxyribonucleotide)n-3'-hydroxyl + 5'-phospho-(deoxyribonucleotide)m = (deoxyribonucleotide)n+m + AMP + beta-nicotinamide D-nucleotide.. Its function is as follows. Catalyzes the formation of phosphodiester linkages between 5'-phosphoryl and 3'-hydroxyl groups in double-stranded DNA using NAD as a coenzyme and as the energy source for the reaction. In Pseudomonas putida (strain GB-1), this protein is DNA ligase B.